Consider the following 597-residue polypeptide: Arginine--tRNA ligase (597 aa).

Positions 125–135 (PNTNKPLHLGH) match the 'HIGH' region motif.

This sequence belongs to the class-I aminoacyl-tRNA synthetase family. In terms of assembly, monomer.

It is found in the cytoplasm. It carries out the reaction tRNA(Arg) + L-arginine + ATP = L-arginyl-tRNA(Arg) + AMP + diphosphate. In Porphyromonas gingivalis (strain ATCC BAA-308 / W83), this protein is Arginine--tRNA ligase.